A 171-amino-acid polypeptide reads, in one-letter code: Large ribosomal subunit protein bL9 (171 aa).

Belongs to the bacterial ribosomal protein bL9 family.

Functionally, binds to the 23S rRNA. This Rickettsia typhi (strain ATCC VR-144 / Wilmington) protein is Large ribosomal subunit protein bL9.